The chain runs to 566 residues: Putative ankyrin repeat protein RF_0987 (566 aa).

3 disordered regions span residues 61-118, 276-314, and 355-392; these read KKKN…HENS, PPVMPTNQPSTQPITPPSPNTPVTTPSKVVPTTDSSAEI, and VNNNQTTNNQEKSPPVSSSNVTIQKQDDKVNNETSEST. The segment covering 78–92 has biased composition (basic and acidic residues); the sequence is NQEEPKLASQEHTEA. Over residues 101–112 the composition is skewed to polar residues; sequence TGNTALPSVTAS. Residues 296 to 308 are compositionally biased toward low complexity; that stretch reads TPVTTPSKVVPTT. A compositionally biased stretch (polar residues) spans 365–378; the sequence is EKSPPVSSSNVTIQ. ANK repeat units lie at residues 506-535 and 539-566; these read SGETLLTAAIYNDNYYLAKFLVIRGIKIST and ECQYPLDIALAQGNANIACMLIKAKGYQ.

This Rickettsia felis (strain ATCC VR-1525 / URRWXCal2) (Rickettsia azadi) protein is Putative ankyrin repeat protein RF_0987.